A 1468-amino-acid polypeptide reads, in one-letter code: Neuropathy target esterase sws (1468 aa).

The Lumenal segment spans residues 1 to 34; that stretch reads MDVLEMLRASASGSYNTIFSDAWCQYVSKQITAT. A helical transmembrane segment spans residues 35-55; it reads VYMYCALVMMSLLFIAWFLYF. The Cytoplasmic portion of the chain corresponds to 56-1468; sequence KRMARLRLRD…RSSPNNETKN (1413 aa). 174–301 serves as a coordination point for a nucleoside 3',5'-cyclic phosphate; it reads IFGHFEKPVF…IRVIQVIMIR (128 aa). 2 stretches are compositionally biased toward polar residues: residues 332 to 348 and 357 to 366; these read TMSG…SRQA and NQLNLMQSAA. A disordered region spans residues 332–411; that stretch reads TMSGPINSQT…DGSFHGTTNL (80 aa). Phosphoserine occurs at positions 442 and 451. A nucleoside 3',5'-cyclic phosphate contacts are provided by residues 480 to 607 and 596 to 723; these read ELGL…VVRR and IVLD…LSHR. One can recognise a PNPLA domain in the interval 950–1116; that stretch reads LVLGGGGARG…VNNLPGHLWR (167 aa). Residues 954-959 carry the GXGXXG motif; it reads GGGARG. Residues 981-985 carry the GXSXG motif; it reads GVSIG. The active-site Nucleophile is Ser-983. Asp-1103 acts as the Proton acceptor in catalysis. A DGA/G motif is present at residues 1103–1105; it reads DGG. At Ser-1197 the chain carries Phosphoserine. The segment at 1368–1468 is disordered; it reads ERKMDKSTQS…RSSPNNETKN (101 aa). Residues 1374 to 1383 are compositionally biased toward low complexity; that stretch reads STQSSPPTSS. The segment covering 1385–1395 has biased composition (basic and acidic residues); that stretch reads TDMRGKEEAKH. Residues 1419–1441 are compositionally biased toward low complexity; the sequence is TQTGQEQELQQQQKLQQLQQDQG. Basic and acidic residues predominate over residues 1446–1459; it reads QLVDKDKEEDKENR.

The protein belongs to the NTE family. As to quaternary structure, interacts with Pka-C3; interaction inhibits the catalytic function of Pka-C3 and the esterase activity of sws.

The protein localises to the endoplasmic reticulum membrane. It carries out the reaction a 1-acyl-sn-glycero-3-phosphocholine + H2O = sn-glycerol 3-phosphocholine + a fatty acid + H(+). Phospholipase B that deacylates intracellular phosphatidylcholine (PtdCho), generating glycerophosphocholine (GroPtdCho). This deacylation occurs at both sn-2 and sn-1 positions of PtdCho. Its specific chemical modification by certain organophosphorus (OP) compounds leads to distal axonopathy. Plays a role in the signaling mechanism between neurons and glia that regulates glia wrapping during development of the adult brain. Essential for membrane lipid homeostasis and cell survival in both neurons and glia of the adult brain. The chain is Neuropathy target esterase sws from Drosophila sechellia (Fruit fly).